A 235-amino-acid chain; its full sequence is Homeobox-leucine zipper protein ATHB-12 (235 aa).

The homeobox DNA-binding region spans 27–86 (KSNNQKRFSEEQIKSLELIFESETRLEPRKKVQVARELGLQPRQVAIWFQNKRARWKTKQ). Residues 87–122 (LEKEYNTLRANYNNLASQFEIMKKEKQSLVSELQRL) are leucine-zipper. Basic and acidic residues-rich tracts occupy residues 128–138 (RPKEEKHHECC) and 152–162 (HNGKSEPEGRL). Positions 128–167 (RPKEEKHHECCGDQGLALSSSTESHNGKSEPEGRLDQGSV) are disordered.

Belongs to the HD-ZIP homeobox family. Class I subfamily. As to quaternary structure, interacts with TFIIB1. In terms of tissue distribution, widely expressed.

It is found in the nucleus. In terms of biological role, probable transcription activator that may act as growth regulators in response to water deficit. The sequence is that of Homeobox-leucine zipper protein ATHB-12 (ATHB-12) from Arabidopsis thaliana (Mouse-ear cress).